The sequence spans 309 residues: Taste receptor type 2 member 20 (309 aa).

Residues Met1–His6 are Extracellular-facing. The helical transmembrane segment at Ile7–Ile27 threads the bilayer. Residues Ala28–Gln46 are Cytoplasmic-facing. The helical transmembrane segment at Ile47 to Tyr67 threads the bilayer. Residues Ser68–Lys79 are Extracellular-facing. The helical transmembrane segment at Val80–Ala100 threads the bilayer. Over Ser101–Ala125 the chain is Cytoplasmic. A helical membrane pass occupies residues Lys126–Met146. Residues Lys147–Thr178 are Extracellular-facing. Residues Asn161 and Asn176 are each glycosylated (N-linked (GlcNAc...) asparagine). A helical membrane pass occupies residues Val179 to Ile199. Topologically, residues Tyr200–Gln229 are cytoplasmic. A helical membrane pass occupies residues Thr230–Trp250. At Asn251–Ile259 the chain is on the extracellular side. A helical membrane pass occupies residues Val260–Ile280. Over Trp281 to Pro309 the chain is Cytoplasmic.

The protein belongs to the G-protein coupled receptor T2R family.

Its subcellular location is the membrane. Its function is as follows. Receptor that may play a role in the perception of bitterness and is gustducin-linked. May play a role in sensing the chemical composition of the gastrointestinal content. The activity of this receptor may stimulate alpha gustducin, mediate PLC-beta-2 activation and lead to the gating of TRPM5. This is Taste receptor type 2 member 20 (TAS2R20) from Gorilla gorilla gorilla (Western lowland gorilla).